We begin with the raw amino-acid sequence, 482 residues long: Auxin transporter-like protein 4 (482 aa).

The Cytoplasmic segment spans residues 1–59 (MLSQNQAEEAIVTNMNETEQEGGSSLEEIAEDQSMFNFKSFLWHGGSVWDAWFSCASNQ). The helical transmembrane segment at 60–77 (VAQVLLTLPYSFSQLGMV) threads the bilayer. Topologically, residues 78-79 (SG) are extracellular. The helical transmembrane segment at 80–100 (IVFQIFYGLIGSWTAYLISVL) threads the bilayer. Residues 101–135 (YVEYRARKEKENVNFKNHVIQWFEVLDGLLGRYWK) lie on the Cytoplasmic side of the membrane. Residues 136–156 (ALGLAFNCTFLLFGSVIQLIA) form a helical membrane-spanning segment. Topologically, residues 157–172 (CASNIYYINDKLDKRT) are extracellular. A helical transmembrane segment spans residues 173-193 (WTYIFGACCATTVFIPSFHNY). Residues 194-196 (RIW) are Cytoplasmic-facing. Residues 197-217 (SFLGLGMTTYTAWYMAIAAIV) traverse the membrane as a helical segment. At 218–232 (NGQIENVVHSGPTKL) the chain is on the extracellular side. A helical transmembrane segment spans residues 233-253 (VLYFTGATNILYTFGGHAVTV). Over 254-266 (EIMHAMWKPQKFK) the chain is Cytoplasmic. Residues 267–287 (YIYFLATLYVFTLTIPSAVAV) form a helical membrane-spanning segment. Topologically, residues 288 to 314 (YWAFGDELLNHSNAFSLLPKNGFRDAA) are extracellular. Asn-297 carries an N-linked (GlcNAc...) asparagine glycan. Residues 315-335 (VILMLIHQFITFGFACTPLYF) form a helical membrane-spanning segment. Topologically, residues 336 to 356 (VWEKVIGMHDTKSICLRALVR) are cytoplasmic. A helical membrane pass occupies residues 357-377 (LPVVIPIWFLAIIFPFFGPIN). Ser-378 is a topological domain (extracellular). A helical membrane pass occupies residues 379–399 (AVGALLVTFTVYIIPALAHML). At 400–422 (TYRTASARKNAVEKPPSFLPSWT) the chain is on the cytoplasmic side. The helical transmembrane segment at 423-443 (AVYVLNAFIVVWVLVVGFGFG) threads the bilayer. Over 444-482 (GWASMTNFIRQIDTFGLFAKCYQCKPPTPPQAPSPHARH) the chain is Extracellular.

This sequence belongs to the amino acid/polyamine transporter 2 family. Amino acid/auxin permease (AAAP) (TC 2.A.18.1) subfamily. Shoots and roots of nodulating plants, at low levels.

Its subcellular location is the cell membrane. Carrier protein involved in proton-driven auxin influx. Mediates the formation of auxin gradient from developing leaves (site of auxin biosynthesis) to tips by contributing to the loading of auxin in vascular tissues and facilitating acropetal (base to tip) auxin transport within inner tissues of the root apex, and basipetal (tip to base) auxin transport within outer tissues of the root apex. May be involved in lateral roots and nodules formation. The sequence is that of Auxin transporter-like protein 4 (LAX4) from Medicago truncatula (Barrel medic).